Reading from the N-terminus, the 182-residue chain is Small ribosomal subunit protein uS4 (182 aa).

2 disordered regions span residues 1–23 and 158–182; these read MGHP…ADRI and SSVA…KDEE. An S4 RNA-binding domain is found at 103–170; it reads RRLQSLVFKR…AKQFETQETE (68 aa). Residues 167 to 182 show a composition bias toward acidic residues; that stretch reads QETEEVAAEEEPKDEE.

Belongs to the universal ribosomal protein uS4 family. Part of the 30S ribosomal subunit. Contacts protein S5. The interaction surface between S4 and S5 is involved in control of translational fidelity.

Functionally, one of the primary rRNA binding proteins, it binds directly to 16S rRNA where it nucleates assembly of the body of the 30S subunit. In terms of biological role, with S5 and S12 plays an important role in translational accuracy. The polypeptide is Small ribosomal subunit protein uS4 (Methanosphaera stadtmanae (strain ATCC 43021 / DSM 3091 / JCM 11832 / MCB-3)).